A 210-amino-acid polypeptide reads, in one-letter code: Imidazole glycerol phosphate synthase subunit HisH (210 aa).

The Glutamine amidotransferase type-1 domain maps to 3-208 (PIAIIDYGMG…GELVRHAGNA (206 aa)). C81 functions as the Nucleophile in the catalytic mechanism. Active-site residues include H183 and E185.

Heterodimer of HisH and HisF.

The protein resides in the cytoplasm. The catalysed reaction is 5-[(5-phospho-1-deoxy-D-ribulos-1-ylimino)methylamino]-1-(5-phospho-beta-D-ribosyl)imidazole-4-carboxamide + L-glutamine = D-erythro-1-(imidazol-4-yl)glycerol 3-phosphate + 5-amino-1-(5-phospho-beta-D-ribosyl)imidazole-4-carboxamide + L-glutamate + H(+). The enzyme catalyses L-glutamine + H2O = L-glutamate + NH4(+). Its pathway is amino-acid biosynthesis; L-histidine biosynthesis; L-histidine from 5-phospho-alpha-D-ribose 1-diphosphate: step 5/9. IGPS catalyzes the conversion of PRFAR and glutamine to IGP, AICAR and glutamate. The HisH subunit catalyzes the hydrolysis of glutamine to glutamate and ammonia as part of the synthesis of IGP and AICAR. The resulting ammonia molecule is channeled to the active site of HisF. In Moorella thermoacetica (strain ATCC 39073 / JCM 9320), this protein is Imidazole glycerol phosphate synthase subunit HisH.